The primary structure comprises 670 residues: Probable metal-nicotianamine transporter YSL4 (670 aa).

Transmembrane regions (helical) follow at residues 35–55 (ITIRGLISSALLGILFCIITH), 59–79 (LTIGIIPSLNVAAGLLGFFFI), 107–127 (CVVSCYGLAYSGGFGSYLIAM), 151–171 (GLWWMTGFLFVVSFLGLFCLV), 273–293 (LVNCSVLLGAIISWGFLWPFI), 318–338 (VFIAISIILGDGLYNLIKIIV), 389–409 (FAVSGYVGLAAISTAIIPLIF), 416–436 (FVLCSYLVAPGLAFCNSYGAG), 450–470 (GLFIVASIVGNNGGVIAGLAA), 507–527 (LGTAMGCIIAPLTFWLFWTAF), 559–579 (PKHCLALCCGFFIAALIVNLI), 601–621 (FYIGAYFAIDMFVGTVIMLVW), and 636–656 (VASGLICGDGIWTIPSAILSI).

The protein belongs to the YSL (TC 2.A.67.2) family.

It localises to the membrane. Functionally, may be involved in the transport of nicotianamine-chelated metals. The chain is Probable metal-nicotianamine transporter YSL4 (YSL4) from Arabidopsis thaliana (Mouse-ear cress).